Reading from the N-terminus, the 130-residue chain is Small ribosomal subunit protein uS9 (130 aa).

This sequence belongs to the universal ribosomal protein uS9 family.

This is Small ribosomal subunit protein uS9 from Vibrio cholerae serotype O1 (strain ATCC 39541 / Classical Ogawa 395 / O395).